A 274-amino-acid chain; its full sequence is tRNA-cytidine(32) 2-sulfurtransferase (274 aa).

The short motif at 40 to 45 (SGGKDS) is the PP-loop motif element. 3 residues coordinate [4Fe-4S] cluster: C115, C118, and C206.

This sequence belongs to the TtcA family. Homodimer. The cofactor is Mg(2+). Requires [4Fe-4S] cluster as cofactor.

It localises to the cytoplasm. It carries out the reaction cytidine(32) in tRNA + S-sulfanyl-L-cysteinyl-[cysteine desulfurase] + AH2 + ATP = 2-thiocytidine(32) in tRNA + L-cysteinyl-[cysteine desulfurase] + A + AMP + diphosphate + H(+). It participates in tRNA modification. Its function is as follows. Catalyzes the ATP-dependent 2-thiolation of cytidine in position 32 of tRNA, to form 2-thiocytidine (s(2)C32). The sulfur atoms are provided by the cysteine/cysteine desulfurase (IscS) system. The polypeptide is tRNA-cytidine(32) 2-sulfurtransferase (Pseudomonas aeruginosa (strain LESB58)).